The sequence spans 154 residues: Protein X (154 aa).

The tract at residues 68-117 is mitochondrial targeting sequence; that stretch reads PCALRFTSARRMETTVNAHQVLPKVLHKRTLGLSAMSTTDLEAYFKDCLF.

The protein belongs to the orthohepadnavirus protein X family. May form homodimer. May interact with host CEBPA, CFLAR, CREB1, DDB1, E4F1, HBXIP, HSPD1/HSP60, NFKBIA, POLR2E and SMAD4. Interacts with host SMC5-SMC6 complex and induces its degradation. Interacts with host TRPC4AP; leading to prevent ubiquitination of TRPC4AP. Interacts with host PLSCR1; this interaction promotes ubiquitination and degradation of HBx and impairs HBx-mediated cell proliferation. In terms of processing, a fraction may be phosphorylated in insect cells and HepG2 cells, a human hepatoblastoma cell line. Phosphorylated in vitro by host protein kinase C or mitogen-activated protein kinase. N-acetylated in insect cells.

The protein resides in the host cytoplasm. It localises to the host nucleus. Its subcellular location is the host mitochondrion. Its function is as follows. Multifunctional protein that plays a role in silencing host antiviral defenses and promoting viral transcription. Does not seem to be essential for HBV infection. May be directly involved in development of cirrhosis and liver cancer (hepatocellular carcinoma). Most of cytosolic activities involve modulation of cytosolic calcium. The effect on apoptosis is controversial depending on the cell types in which the studies have been conducted. May induce apoptosis by localizing in mitochondria and causing loss of mitochondrial membrane potential. May also modulate apoptosis by binding host CFLAR, a key regulator of the death-inducing signaling complex (DISC). Promotes viral transcription by using the host E3 ubiquitin ligase DDB1 to target the SMC5-SMC6 complex to proteasomal degradation. This host complex would otherwise bind to viral episomal DNA, and prevents its transcription. Moderately stimulates transcription of many different viral and cellular transcription elements. Promoters and enhancers stimulated by HBx contain DNA binding sites for NF-kappa-B, AP-1, AP-2, c-EBP, ATF/CREB, or the calcium-activated factor NF-AT. This Hepatitis B virus genotype C subtype adr (strain Japan/adr4/1983) (HBV-C) protein is Protein X.